The following is a 412-amino-acid chain: Tyrosine--tRNA ligase 1 (412 aa).

L-tyrosine is bound at residue Tyr41. The short motif at 46-55 (ATADSLHVGH) is the 'HIGH' region element. L-tyrosine-binding residues include Tyr174 and Gln178. The short motif at 234–238 (KMGKS) is the 'KMSKS' region element. Lys237 contacts ATP. Residues 348–411 (LSLTDLLLEH…KKQHLHLRLE (64 aa)) form the S4 RNA-binding domain.

This sequence belongs to the class-I aminoacyl-tRNA synthetase family. TyrS type 1 subfamily. In terms of assembly, homodimer.

Its subcellular location is the cytoplasm. The enzyme catalyses tRNA(Tyr) + L-tyrosine + ATP = L-tyrosyl-tRNA(Tyr) + AMP + diphosphate + H(+). Its function is as follows. Catalyzes the attachment of tyrosine to tRNA(Tyr) in a two-step reaction: tyrosine is first activated by ATP to form Tyr-AMP and then transferred to the acceptor end of tRNA(Tyr). The protein is Tyrosine--tRNA ligase 1 of Pseudomonas aeruginosa (strain ATCC 15692 / DSM 22644 / CIP 104116 / JCM 14847 / LMG 12228 / 1C / PRS 101 / PAO1).